The primary structure comprises 222 residues: MKNNSQLLMPREKMLKFGISALTDVELLALFLRTGTRGKDVLTLAKEMLENFGSLYGLLTSEYEQFSGVHGIGVAKFAQLKGIAELARRYYNVRMREESPLLSPEMTREFLQSQLTGEEREIFMVIFLDSQHRVITHRRLFSGTLNHVEVHPREIIREAIKINASALILAHNHPSGCAEPSKADKLITERIIKSCQFMDLRVLDHIVIGRGEYVSFAERGWI.

The MPN domain occupies Pro100–Ile222. Zn(2+) is bound by residues His171, His173, and Asp184. The JAMM motif motif lies at His171 to Asp184.

This sequence belongs to the UPF0758 family. YicR subfamily.

The polypeptide is UPF0758 protein YicR (Escherichia coli (strain K12 / MC4100 / BW2952)).